Here is a 126-residue protein sequence, read N- to C-terminus: 13 kDa ribonucleoprotein-associated protein (126 aa).

This sequence belongs to the eukaryotic ribosomal protein eL8 family. As to quaternary structure, component of the U3 snoRNP particle. Binds to the C'/D and B/C motifs in U3 snoRNA. Component of the 25S U4/U6.U5 tri-snRNP particle, a subcomplex of the spliceosome. Binds to the 5' stem-loop of U4 snRNA.

It is found in the nucleus. The protein resides in the nucleolus. Its function is as follows. Common component of the spliceosome and rRNA processing machinery. In association with the spliceosomal U4/U6.U5 tri-snRNP particle, required for splicing of pre-mRNA. In association with box C/D snoRNPs, required for processing of pre-ribosomal RNA (rRNA) and site-specific 2'-O-methylation of substrate RNAs. Essential for the accumulation and stability of U4 snRNA, U6 snRNA, and box C/D snoRNAs. The polypeptide is 13 kDa ribonucleoprotein-associated protein (SNU13) (Kluyveromyces lactis (strain ATCC 8585 / CBS 2359 / DSM 70799 / NBRC 1267 / NRRL Y-1140 / WM37) (Yeast)).